Consider the following 57-residue polypeptide: MKPAVDEMFPEGAGPYVDLDEAGGSTGLLMDLAANEKAVHADFFNDFEDLFDDEDIQ.

Belongs to the CSN9 family. In terms of assembly, component of the CSN complex, probably composed of cops1, cops2, cops3, cops4, cops5, cops6, cops7, cops8 and cops9.

It localises to the nucleus. Its subcellular location is the cytoplasm. It is found in the nucleoplasm. Its function is as follows. Component of the COP9 signalosome complex (CSN), a complex involved in various cellular and developmental processes. The CSN complex is an essential regulator of the ubiquitin (Ubl) conjugation pathway by mediating the deneddylation of the cullin subunits of SCF-type E3 ligase complexes, leading to decrease the Ubl ligase activity. May play a role in cell proliferation. The chain is COP9 signalosome complex subunit 9 from Xenopus tropicalis (Western clawed frog).